A 249-amino-acid polypeptide reads, in one-letter code: Tetraspanin-7 (249 aa).

Topologically, residues 1 to 16 are cytoplasmic; that stretch reads MASRRMETKPVITCLK. Residues 17 to 40 form a helical membrane-spanning segment; that stretch reads TLLIIYSFVFWITGVILLAVGVWG. The Extracellular portion of the chain corresponds to 41–56; that stretch reads KLTLGTYISLIAENST. The N-linked (GlcNAc...) asparagine glycan is linked to Asn-54. The chain crosses the membrane as a helical span at residues 57–75; sequence NAPYVLIGTGTTIVVFGLF. The Cytoplasmic segment spans residues 76 to 86; sequence GCFATCRGSPW. A helical membrane pass occupies residues 87-112; that stretch reads MLKLYAMFLSLVFLAELVAGISGFVF. At 113–213 the chain is on the extracellular side; the sequence is RHEIKDTFLR…LVTSFMETNM (101 aa). 4 N-linked (GlcNAc...) asparagine glycosylation sites follow: Asn-155, Asn-158, Asn-177, and Asn-188. The chain crosses the membrane as a helical span at residues 214–234; the sequence is GIIAGVAFGIAFSQLIGMLLA. Residues 235–249 are Cytoplasmic-facing; sequence CCLSRFITANQYEMV.

Belongs to the tetraspanin (TM4SF) family.

Its subcellular location is the membrane. Its function is as follows. May be involved in cell proliferation and cell motility. This chain is Tetraspanin-7 (Tspan7), found in Mus musculus (Mouse).